The primary structure comprises 257 residues: S-methyl-5'-thioadenosine phosphorylase (257 aa).

Phosphate is bound by residues Ser10 and 50 to 51 (RH). Met180 contacts substrate. Thr181 contacts phosphate. 204–206 (DYD) contacts substrate.

Belongs to the PNP/MTAP phosphorylase family. MTAP subfamily. In terms of assembly, homohexamer. Dimer of a homotrimer.

The enzyme catalyses S-methyl-5'-thioadenosine + phosphate = 5-(methylsulfanyl)-alpha-D-ribose 1-phosphate + adenine. It participates in amino-acid biosynthesis; L-methionine biosynthesis via salvage pathway; S-methyl-5-thio-alpha-D-ribose 1-phosphate from S-methyl-5'-thioadenosine (phosphorylase route): step 1/1. Functionally, catalyzes the reversible phosphorylation of S-methyl-5'-thioadenosine (MTA) to adenine and 5-methylthioribose-1-phosphate. Involved in the breakdown of MTA, a major by-product of polyamine biosynthesis. Responsible for the first step in the methionine salvage pathway after MTA has been generated from S-adenosylmethionine. Has broad substrate specificity with 6-aminopurine nucleosides as preferred substrates. The sequence is that of S-methyl-5'-thioadenosine phosphorylase from Pyrococcus horikoshii (strain ATCC 700860 / DSM 12428 / JCM 9974 / NBRC 100139 / OT-3).